Reading from the N-terminus, the 567-residue chain is Proline--tRNA ligase (567 aa).

Belongs to the class-II aminoacyl-tRNA synthetase family. ProS type 1 subfamily. In terms of assembly, homodimer.

It is found in the cytoplasm. The enzyme catalyses tRNA(Pro) + L-proline + ATP = L-prolyl-tRNA(Pro) + AMP + diphosphate. In terms of biological role, catalyzes the attachment of proline to tRNA(Pro) in a two-step reaction: proline is first activated by ATP to form Pro-AMP and then transferred to the acceptor end of tRNA(Pro). As ProRS can inadvertently accommodate and process non-cognate amino acids such as alanine and cysteine, to avoid such errors it has two additional distinct editing activities against alanine. One activity is designated as 'pretransfer' editing and involves the tRNA(Pro)-independent hydrolysis of activated Ala-AMP. The other activity is designated 'posttransfer' editing and involves deacylation of mischarged Ala-tRNA(Pro). The misacylated Cys-tRNA(Pro) is not edited by ProRS. The polypeptide is Proline--tRNA ligase (Staphylococcus epidermidis (strain ATCC 35984 / DSM 28319 / BCRC 17069 / CCUG 31568 / BM 3577 / RP62A)).